A 522-amino-acid chain; its full sequence is Proactivator polypeptide-like 1 (522 aa).

Positions 1–17 (MLCALILWSGLLGAARA) are cleaved as a signal peptide. Residues 18 to 59 (SPISVPRECAKGSEVWCQDLQAAAKCRAVRHCQSAVWNKPTV) constitute a propeptide that is removed on maturation. The Saposin A-type 1 domain maps to 19–59 (PISVPRECAKGSEVWCQDLQAAAKCRAVRHCQSAVWNKPTV). Saposin B-type domains are found at residues 60-144 (KSLP…EPLQ), 183-261 (EGAV…ERES), 291-371 (LGLT…GSKR), and 393-474 (QGSF…HGPK). 3 disulfides stabilise this stretch: Cys-64-Cys-140, Cys-67-Cys-134, and Cys-95-Cys-107. A propeptide spanning residues 146 to 183 (HLAETTSERPLTQEDANEVMAPFLSNGALSFHPSQMPE) is cleaved from the precursor. 3 cysteine pairs are disulfide-bonded: Cys-187-Cys-257, Cys-190-Cys-251, and Cys-216-Cys-227. N-linked (GlcNAc...) asparagine glycosylation is present at Asn-204. Residues 261 to 290 (SAHWLTRVAAVDGVPSLEMEMPRTNELQMQ) constitute a propeptide that is removed on maturation. Disulfide bonds link Cys-295–Cys-367, Cys-298–Cys-361, and Cys-326–Cys-337. N-linked (GlcNAc...) (high mannose) asparagine glycosylation occurs at Asn-312. Positions 371 to 392 (RRARSISRAVATTPSLPVDEEN) are excised as a propeptide. 3 disulfides stabilise this stretch: Cys-397–Cys-470, Cys-400–Cys-464, and Cys-428–Cys-439. Residues 475–522 (TPLLGTDQCVMGPSFWCKSPEAAEMCNALEHCQRLVWKKPVSKINEQP) constitute a propeptide that is removed on maturation. The region spanning 476-516 (PLLGTDQCVMGPSFWCKSPEAAEMCNALEHCQRLVWKKPVS) is the Saposin A-type 2 domain.

The protein localises to the secreted. Functionally, may activate the lysosomal degradation of sphingolipids. This Mus musculus (Mouse) protein is Proactivator polypeptide-like 1 (Psapl1).